The primary structure comprises 131 residues: Small ribosomal subunit protein eS17 (131 aa).

It belongs to the eukaryotic ribosomal protein eS17 family.

This is Small ribosomal subunit protein eS17 (RPS17) from Theileria annulata.